We begin with the raw amino-acid sequence, 352 residues long: C5a anaphylatoxin chemotactic receptor 1 (352 aa).

At Met1–Asp38 the chain is on the extracellular side. Sulfotyrosine is present on residues Tyr11 and Tyr14. A helical transmembrane segment spans residues Met39–Phe65. The Cytoplasmic segment spans residues Glu66–Thr70. The chain crosses the membrane as a helical span at residues Ile71–Phe94. Over Ser95 to Arg111 the chain is Extracellular. A disulfide bridge links Cys110 with Cys189. Residues Ile112–Ala133 traverse the membrane as a helical segment. The Cytoplasmic segment spans residues Asp134–Ala154. Residues Trp155–Phe175 traverse the membrane as a helical segment. Topologically, residues Arg176–Arg202 are extracellular. A helical transmembrane segment spans residues Gly203–Leu228. Residues Ile229–Lys244 are Cytoplasmic-facing. A helical transmembrane segment spans residues Val245–Met267. Topologically, residues Ala268–Asp284 are extracellular. The helical transmembrane segment at Ser285–Ala305 threads the bilayer. Topologically, residues Ala306–Val352 are cytoplasmic. Phosphoserine occurs at positions 316, 329, 334, 336, and 340.

This sequence belongs to the G-protein coupled receptor 1 family. As to quaternary structure, homodimer. May also form higher-order oligomers. Interacts (when phosphorylated) with ARRB1 and ARRB2; the interaction is associated with internalization of C5aR. Sulfation plays a critical role in the association of C5aR with C5a, but no significant role in the ability of the receptor to transduce a signal and mobilize calcium in response to a small peptide agonist. In terms of processing, phosphorylated on serine residues in response to C5a binding, resulting in internalization of the receptor and short-term desensitization to C5a.

It localises to the cell membrane. It is found in the cytoplasmic vesicle. Its function is as follows. Receptor for the chemotactic and inflammatory peptide anaphylatoxin C5a. The ligand interacts with at least two sites on the receptor: a high-affinity site on the extracellular N-terminus, and a second site in the transmembrane region which activates downstream signaling events. Receptor activation stimulates chemotaxis, granule enzyme release, intracellular calcium release and superoxide anion production. The polypeptide is C5a anaphylatoxin chemotactic receptor 1 (C5AR1) (Canis lupus familiaris (Dog)).